A 229-amino-acid chain; its full sequence is DNA repair protein RecO (229 aa).

It belongs to the RecO family.

In terms of biological role, involved in DNA repair and RecF pathway recombination. This Legionella pneumophila subsp. pneumophila (strain Philadelphia 1 / ATCC 33152 / DSM 7513) protein is DNA repair protein RecO.